A 1102-amino-acid chain; its full sequence is ATP-dependent DNA helicase MPH1 (1102 aa).

The segment at 19-55 (ALDKPATSGLHSREQEQQRDISNATPHTSTDLELEDF) is disordered. Residues 38-49 (DISNATPHTSTD) are compositionally biased toward polar residues. In terms of domain architecture, Helicase ATP-binding spans 147-315 (IVKNGLFNNT…DVIDNLGVSH (169 aa)). 160 to 167 (LPTGLGKT) is a binding site for ATP. The DEAH box motif lies at 263-266 (DEAH). Positions 490 to 651 (NLLNYFMDAG…GSRFNFRHDL (162 aa)) constitute a Helicase C-terminal domain. Disordered stretches follow at residues 672–702 (PIEN…FNMP), 720–743 (ASKT…DEIS), 818–837 (SQGI…KSRY), and 858–1102 (SGRK…SESG). Basic residues predominate over residues 687-699 (RSTRGKKASKKKF). The segment covering 822–837 (ETRHTKPHGDTDKSRY) has biased composition (basic and acidic residues). Over residues 1003 to 1019 (SSGAASKSGSTASTAAK) the composition is skewed to low complexity. Residues 1069–1082 (SDDDDDDNDDEDDV) show a composition bias toward acidic residues.

Belongs to the DEAD box helicase family. DEAH subfamily. FANCM sub-subfamily. As to quaternary structure, interacts with the MHF histone-fold complex to form the FANCM-MHF complex.

It localises to the nucleus. It catalyses the reaction ATP + H2O = ADP + phosphate + H(+). Functionally, ATP-dependent DNA helicase involved in DNA damage repair by homologous recombination and in genome maintenance. Capable of unwinding D-loops. Plays a role in limiting crossover recombinants during mitotic DNA double-strand break (DSB) repair. Component of a FANCM-MHF complex which promotes gene conversion at blocked replication forks, probably by reversal of the stalled fork. The sequence is that of ATP-dependent DNA helicase MPH1 from Pyricularia oryzae (strain 70-15 / ATCC MYA-4617 / FGSC 8958) (Rice blast fungus).